Consider the following 227-residue polypeptide: Cleavage and polyadenylation specificity factor subunit 5 (227 aa).

Serine 2 carries the post-translational modification N-acetylserine. The segment at 2–147 is necessary for RNA-binding; sequence SVVPPNRSQT…DWVIDDCIGN (146 aa). Arginine 15 is modified (omega-N-methylarginine). N6-acetyllysine is present on residues lysine 23 and lysine 29. Residue tyrosine 40 is modified to Phosphotyrosine. Lysine 56 is modified (N6-acetyllysine). Positions 76–201 constitute a Nudix hydrolase domain; it reads MRRTVEGVLI…KLVAAPLFEL (126 aa). Positions 81 to 160 are necessary for interactions with PAPOLA and PABPN1; it reads EGVLIVHEHR…PNFEPPQYPY (80 aa). The segment at 102–104 is interaction with RNA; sequence TFF. The short motif at 109–130 is the Nudix box element; it reads GELNPGEDEVEGLKRLMTEILG.

This sequence belongs to the Nudix hydrolase family. CPSF5 subfamily. Homodimer (via N- and C-terminus); binds RNA as homodimer. Component of the cleavage factor Im (CFIm) complex which is a heterotetramer composed of two subunits of NUDT21/CPSF5 and two subunits of CPSF6 or CPSF7 or a heterodimer of CPSF6 and CPSF7. The cleavage factor Im (CFIm) complex associates with the CPSF and CSTF complexes to promote the assembly of the core mRNA 3'-processing machinery. Interacts with CPSF6 (via the RRM domain); this interaction is direct and enhances binding to RNA. Interacts with CPSF7. Interacts with FIP1L1; this interaction occurs in a RNA sequence-specific manner. Interacts with PABPN1. Interacts (via N-terminus) with PAPOLA (via C-terminus); this interaction is direct and diminished by acetylation. Interacts with SNRNP70. Interacts with VIRMA. Acetylated mainly by p300/CBP, recruited to the complex by CPSF6. Acetylation decreases interaction with PAPAO. Deacetylated by the class I/II HDACs, HDAC1, HDAC3 and HDAC10, and by the class III HDACs, SIRT1 and SIRT2. In terms of tissue distribution, expressed in testis. Expressed in male germ cells (at protein level).

It localises to the nucleus. It is found in the cytoplasm. In terms of biological role, component of the cleavage factor Im (CFIm) complex that functions as an activator of the pre-mRNA 3'-end cleavage and polyadenylation processing required for the maturation of pre-mRNA into functional mRNAs. CFIm contributes to the recruitment of multiprotein complexes on specific sequences on the pre-mRNA 3'-end, so called cleavage and polyadenylation signals (pA signals). Most pre-mRNAs contain multiple pA signals, resulting in alternative cleavage and polyadenylation (APA) producing mRNAs with variable 3'-end formation. The CFIm complex acts as a key regulator of cleavage and polyadenylation site choice during APA through its binding to 5'-UGUA-3' elements localized in the 3'-untranslated region (UTR) for a huge number of pre-mRNAs. NUDT21/CPSF5 activates indirectly the mRNA 3'-processing machinery by recruiting CPSF6 and/or CPSF7. Binds to 5'-UGUA-3' elements localized upstream of pA signals that act as enhancers of pre-mRNA 3'-end processing. The homodimer mediates simultaneous sequence-specific recognition of two 5'-UGUA-3' elements within the pre-mRNA. Plays a role in somatic cell fate transitions and pluripotency by regulating widespread changes in gene expression through an APA-dependent function. Binds to chromatin. Binds to, but does not hydrolyze mono- and di-adenosine nucleotides. In Mus musculus (Mouse), this protein is Cleavage and polyadenylation specificity factor subunit 5.